Consider the following 358-residue polypeptide: HLA class I histocompatibility antigen, alpha chain E (358 aa).

Residues 1 to 21 (MVDGTLLLLLSEALALTQTWA) form the signal peptide. The interval 22–111 (GSHSLKYFHT…LRGYYNQSEA (90 aa)) is alpha-1. Residues 22–305 (GSHSLKYFHT…KPASQPTIPI (284 aa)) are Extracellular-facing. 5 residues coordinate a peptide antigen: Tyr28, Glu84, Ser87, Asn98, and Tyr105. A glycan (N-linked (GlcNAc...) asparagine) is linked at Asn107. An alpha-2 region spans residues 112–203 (GSHTLQWMHG…EKGKETLLHL (92 aa)). The cysteines at positions 122 and 185 are disulfide-linked. A peptide antigen contacts are provided by Ser164, Lys167, Gln177, Tyr180, and Tyr192. The segment at 204-295 (EPPKTHVTHH…GLPEPVTLRW (92 aa)) is alpha-3. An Ig-like C1-type domain is found at 206–294 (PKTHVTHHPI…EGLPEPVTLR (89 aa)). A disulfide bond links Cys224 and Cys280. A connecting peptide region spans residues 296-305 (KPASQPTIPI). The helical transmembrane segment at 306–329 (VGIIAGLVLLGSVVSGAVVAAVIW) threads the bilayer. Over 330-358 (RKKSSGGKGGSYSKAEWSDSAQGSESHSL) the chain is Cytoplasmic. A disordered region spans residues 333–358 (SSGGKGGSYSKAEWSDSAQGSESHSL). The segment covering 348 to 358 (DSAQGSESHSL) has biased composition (polar residues). Ser353 carries the phosphoserine modification.

It belongs to the MHC class I family. As to quaternary structure, forms a heterotrimer with B2M and a self- or a pathogen-derived peptide (peptide-bound HLA-E-B2M). Similarly to MHC class Ia assembly, HLA-E-B2M heterodimer interacts with components of the antigen processing machinery TAPBP and TAP1-TAP2 complex; this interaction is required for peptide loading and translocation to the cell surface. Interacts with CALCR; this interaction is required for appropriate folding. The optimum binding peptide is a nonamer (VL9) that is primarily derived from amino-acid residues 3-11 of the signal sequences of most HLA-A, -B, -C and -G molecules. The VL9 peptide anchors to five main sites in the peptide-binding groove of HLA-E. Peptide-bound HLA-E-B2M complex interacts with KLRD1-KLRC1 receptor on NK cells. Binds with lower affinity to activating KLRD1-KLRC2. The common subunit KLRC1 plays a prominent role in directly interacting with HLA-E. Peptide-bound HLA-E-B2M interacts with the alpha-beta TCR on unconventional CD8+ T cells. Peptide-free HLA-E interacts with HLA-F-B2M complex; this interaction may regulate the intracellular trafficking and the stability of peptide-free MHC class I open conformers (OCs). Post-translationally, N-glycosylated. In terms of processing, the soluble form (sHLA-E) can be partly produced by proteolytic cleavage at the cell surface (shedding) by a matrix metalloproteinase. Alternative splicing is also suggested as a mechanism for generation of sHLA-E, although it remains to be proved. Expressed in secretory endometrial cells during pregnancy (at protein level). The expression in nonlymphoid tissues is restricted to endothelial cells from all types of vessels, including arteries, veins, capillaries, and lymphatics (at protein level). In lymphoid organs, it is mainly expressed in endothelial venules, B and T cells, monocytes, macrophages, NK cells and megakaryocytes (at protein level).

The protein resides in the cell membrane. Its subcellular location is the golgi apparatus membrane. It localises to the secreted. Non-classical major histocompatibility class Ib molecule involved in immune self-nonself discrimination. In complex with B2M/beta-2-microglobulin binds nonamer self-peptides derived from the signal sequence of classical MHC class Ia molecules (VL9 peptides - VMAPRT[V/L][L/V/I/F]L). Peptide-bound HLA-E-B2M heterotrimeric complex primarily functions as a ligand for natural killer (NK) cell inhibitory receptor KLRD1-KLRC1, enabling NK cells to monitor the expression of other MHC class I molecules in healthy cells and to tolerate self. Upon cellular stress, preferentially binds signal sequence-derived peptides from stress-induced chaperones and is no longer recognized by NK cell inhibitory receptor KLRD1-KLRC1, resulting in impaired protection from NK cells. Binds signal sequence-derived peptides from non-classical MHC class Ib HLA-G molecules and acts as a ligand for NK cell activating receptor KLRD1-KLRC2, likely playing a role in the generation and effector functions of adaptive NK cells and in maternal-fetal tolerance during pregnancy. Besides self-peptides, can also bind and present pathogen-derived peptides conformationally similar to VL9 peptides to alpha-beta T cell receptor (TCR) on unconventional CD8-positive cytotoxic T cells, ultimately triggering antimicrobial immune response. Presents HIV gag peptides (immunodominant KAFSPEVIPMF and subdominant KALGPAATL epitopes) predominantly to CD8-positive T cell clones expressing a TRAV17-containing TCR, triggering HLA-E-restricted T cell responses. Presents mycobacterial peptides to HLA-E-restricted CD8-positive T cells eliciting both cytotoxic and immunoregulatory functions. Its function is as follows. (Microbial infection) Viruses like human cytomegalovirus have evolved an escape mechanism whereby virus-induced down-regulation of host MHC class I molecules is coupled to the binding of viral peptides to HLA-E, restoring HLA-E expression and inducing HLA-E-dependent NK cell immune tolerance to infected cells. In terms of biological role, (Microbial infection) May bind HIV-1 gag/Capsid protein p24-derived peptide (AISPRTLNA) on infected cells and may inhibit NK cell cytotoxicity, a mechanism that allows HIV-1 to escape immune recognition. Functionally, (Microbial infection) Upon SARS-CoV-2 infection, may contribute to functional exhaustion of cytotoxic NK cells and CD8-positive T cells. Binds SARS-CoV-2 S/Spike protein S1-derived peptide (LQPRTFLL) expressed on the surface of lung epithelial cells, inducing NK cell exhaustion and dampening of antiviral immune surveillance. The protein is HLA class I histocompatibility antigen, alpha chain E of Homo sapiens (Human).